Reading from the N-terminus, the 64-residue chain is Prokaryotic ubiquitin-like protein Pup (64 aa).

A disordered region spans residues 1–37; that stretch reads MAQEQTQRAGGGEDDETTGGDGSAGQERREKLAAETD. Residues 21–58 form an ARC ATPase binding region; sequence DGSAGQERREKLAAETDDLLDEIDDVLEENAEDFVRAY. The stretch at 24–52 forms a coiled coil; sequence AGQERREKLAAETDDLLDEIDDVLEENAE. Deamidated glutamine is present on Gln64. Gln64 participates in a covalent cross-link: Isoglutamyl lysine isopeptide (Gln-Lys) (interchain with K-? in acceptor proteins).

The protein belongs to the prokaryotic ubiquitin-like protein family. In terms of assembly, strongly interacts with the proteasome-associated ATPase ARC through a hydrophobic interface; the interacting region of Pup lies in its C-terminal half. There is one Pup binding site per ARC hexamer ring. Post-translationally, is modified by deamidation of its C-terminal glutamine to glutamate by the deamidase Dop, a prerequisite to the subsequent pupylation process.

The protein operates within protein degradation; proteasomal Pup-dependent pathway. Its function is as follows. Protein modifier that is covalently attached to lysine residues of substrate proteins, thereby targeting them for proteasomal degradation. The tagging system is termed pupylation. This is Prokaryotic ubiquitin-like protein Pup from Rhodococcus erythropolis (strain PR4 / NBRC 100887).